We begin with the raw amino-acid sequence, 188 residues long: Ribosome maturation factor RimM (188 aa).

The region spanning 96–169 (DDEFYYADLE…TLLIDPLAAG (74 aa)) is the PRC barrel domain.

The protein belongs to the RimM family. In terms of assembly, binds ribosomal protein uS19.

The protein localises to the cytoplasm. Functionally, an accessory protein needed during the final step in the assembly of 30S ribosomal subunit, possibly for assembly of the head region. Essential for efficient processing of 16S rRNA. May be needed both before and after RbfA during the maturation of 16S rRNA. It has affinity for free ribosomal 30S subunits but not for 70S ribosomes. This chain is Ribosome maturation factor RimM, found in Rhizobium etli (strain ATCC 51251 / DSM 11541 / JCM 21823 / NBRC 15573 / CFN 42).